The sequence spans 433 residues: Citrate synthase, mitochondrial (433 aa).

Catalysis depends on residues H274 and H320. R329 provides a ligand contact to oxaloacetate. Residue D375 is part of the active site. Residues R401 and R421 each contribute to the oxaloacetate site.

The protein belongs to the citrate synthase family. In terms of assembly, homodimer.

The protein resides in the mitochondrion matrix. The enzyme catalyses oxaloacetate + acetyl-CoA + H2O = citrate + CoA + H(+). The protein operates within carbohydrate metabolism; tricarboxylic acid cycle; isocitrate from oxaloacetate: step 1/2. Key enzyme of the Krebs tricarboxylic acid cycle which catalyzes the synthesis of citrate from acetyl coenzyme A and oxaloacetate. In Gallus gallus (Chicken), this protein is Citrate synthase, mitochondrial (CS).